A 585-amino-acid polypeptide reads, in one-letter code: Putative sulfur deprivation response regulator (585 aa).

Transmembrane regions (helical) follow at residues 5-25, 30-50, 83-103, 117-137, and 162-182; these read VVDA…RGII, AFAG…MIAA, VASV…IPVV, FMMP…IGTS, and IIGL…SPLL. RCK C-terminal domains lie at 189–274 and 288–372; these read MMAA…LPGL and ETVA…STEW. 5 consecutive transmembrane segments (helical) span residues 389-409, 411-431, 442-462, 482-502, and 561-581; these read LALF…SMDV, PLST…VLTV, ILLT…TGLA, VAAI…GAAV, and FGLP…VLYF.

This sequence belongs to the CitM (TC 2.A.11) transporter family.

It localises to the membrane. Not known; mutations in SAC1 produces cells that cannot synthesize arylsulfatase and cannot take up sulfate as rapidly as wild-type cells. SAC1 is necessary for cells to survive sulfur deprivation. This Chlamydomonas reinhardtii (Chlamydomonas smithii) protein is Putative sulfur deprivation response regulator (SAC1).